The sequence spans 134 residues: Small ribosomal subunit protein bS6 (134 aa).

Residues 99–134 (EPSAMMQKRDRDERKDRERGRRRDEDGFSGDRNEEN) form a disordered region. A compositionally biased stretch (basic and acidic residues) spans 105–134 (QKRDRDERKDRERGRRRDEDGFSGDRNEEN).

It belongs to the bacterial ribosomal protein bS6 family.

Its function is as follows. Binds together with bS18 to 16S ribosomal RNA. In Methylobacterium nodulans (strain LMG 21967 / CNCM I-2342 / ORS 2060), this protein is Small ribosomal subunit protein bS6.